Here is a 469-residue protein sequence, read N- to C-terminus: Phosphoenolpyruvate carboxylase (469 aa).

The protein belongs to the PEPCase type 2 family. Homotetramer. The cofactor is Mg(2+).

The enzyme catalyses oxaloacetate + phosphate = phosphoenolpyruvate + hydrogencarbonate. Its function is as follows. Catalyzes the irreversible beta-carboxylation of phosphoenolpyruvate (PEP) to form oxaloacetate (OAA), a four-carbon dicarboxylic acid source for the tricarboxylic acid cycle. The polypeptide is Phosphoenolpyruvate carboxylase (Pyrococcus abyssi (strain GE5 / Orsay)).